The sequence spans 507 residues: F-box only protein 31 (507 aa).

Residues 19-42 (RQQRRGPAETAAADSEADTDPEEE) form a disordered region. Ser-33 is modified (phosphoserine). The segment covering 33–42 (SEADTDPEEE) has biased composition (acidic residues). Thr-37 carries the phosphothreonine modification. The short motif at 50–55 (RCSLLE) is the D box element. Positions 50–96 (RCSLLELPPELLVEIFASLPGTDLPSLAQVCSRFRRILHTDTIWRRR) constitute an F-box domain. Zn(2+) contacts are provided by Cys-192, His-200, Cys-216, and His-222. Position 264 is a phosphoserine; by ATM (Ser-264). The DDL motif motif lies at 283 to 285 (DDL). Positions 366–417 (EQEAGEGAAPPREPSAKAADGPPAKDGKEPGGGAEAAEQSASSGQGQPFVLP) are disordered. A compositionally biased stretch (low complexity) spans 400 to 412 (EAAEQSASSGQGQ). A Phosphoserine modification is found at Ser-448.

It belongs to the FBXO31 family. As to quaternary structure, part of a SCF (SKP1-cullin-F-box) protein ligase complex SCF(FBXO31) composed of CUL1, SKP1, RBX1 and FBXO31. Interacts (when phosphorylated at Ser-33) with CDC20, promoting ubiquitination by the APC/C complex. Phosphorylation at Ser-264 by ATM following gamma-irradiation results in its stabilization. Phosphorylation at Ser-448 in absence of stress promotes its ubiquitination and degradation by the SCF(FBXO46) complex. Phosphorylation at Ser-33 by AKT1 promotes association with CDC20 and ubiquitination by the APC/C complex. Post-translationally, ubiquitinated by the SCF(FBXO46) complex in absence of stress, promoting its degradation. Ubiquitinated by the APC/C complex following phosphorylation at Ser-33, leading to its degradation by the proteasome.

It localises to the cytoplasm. The protein localises to the cytoskeleton. The protein resides in the microtubule organizing center. Its subcellular location is the centrosome. Its pathway is protein modification; protein ubiquitination. Functionally, substrate-recognition component of the SCF(FBXO31) protein ligase complex, which specifically mediates the ubiquitination of proteins amidated at their C-terminus in response to oxidative stress, leading to their degradation by the proteasome. FBXO31 specifically recognizes and binds C-terminal peptides bearing an amide: C-terminal amidation in response to oxidative stress takes place following protein fragmentation. The SCF(FBXO31) also plays a role in G1 arrest following DNA damage by mediating ubiquitination of phosphorylated cyclin-D1 (CCND1), promoting its degradation by the proteasome, resulting in G1 arrest. The SCF(FBXO31) complex is however not a major regulator of CCND1 stability during the G1/S transition. In response to genotoxic stress, the SCF(FBXO31) complex directs ubiquitination and degradation of phosphorylated MDM2, thereby promoting p53/TP53-mediated DNA damage response. SCF(FBXO31) complex is required for genomic integrity by catalyzing ubiquitination and degradation of cyclin-A (CCNA1 and/or CCNA2) during the G1 phase. In response to genotoxic stress, the SCF(FBXO31) complex directs ubiquitination and degradation of phosphorylated FBXO46 and MAP2K6. SCF(FBXO31) complex promotes ubiquitination and degradation of CDT1 during the G2 phase to prevent re-replication. The SCF(FBXO31) complex also mediates ubiquitination and degradation of DUSP6, OGT and PARD6A. The polypeptide is F-box only protein 31 (Mus musculus (Mouse)).